Reading from the N-terminus, the 413-residue chain is GTPase HflX (413 aa).

The region spanning 200-386 (VRVALVGYTN…KVYETVREIH (187 aa)) is the Hflx-type G domain. Residues 206-213 (GYTNVGKS), 231-235 (FATLD), 252-255 (DTVG), 318-321 (NKID), and 364-366 (SAT) contribute to the GTP site. Residues serine 213 and threonine 233 each coordinate Mg(2+).

It belongs to the TRAFAC class OBG-HflX-like GTPase superfamily. HflX GTPase family. As to quaternary structure, monomer. Associates with the 50S ribosomal subunit. Requires Mg(2+) as cofactor.

It localises to the cytoplasm. Its function is as follows. GTPase that associates with the 50S ribosomal subunit and may have a role during protein synthesis or ribosome biogenesis. The protein is GTPase HflX of Flavobacterium psychrophilum (strain ATCC 49511 / DSM 21280 / CIP 103535 / JIP02/86).